The chain runs to 116 residues: Immunoglobulin heavy variable 2-4 (116 aa).

The signal sequence occupies residues 1 to 19 (MAVLVLLFCLVTFPSCVLS). Residues 20–116 (QVQLKQSGPG…DDTAIYYCAK (97 aa)) enclose the Ig-like domain. The cysteines at positions 41 and 114 are disulfide-linked.

The protein is Immunoglobulin heavy variable 2-4 of Mus musculus (Mouse).